The chain runs to 417 residues: Argininosuccinate synthase (417 aa).

An ATP-binding site is contributed by A8–S16. Position 87 (Y87) interacts with L-citrulline. ATP is bound at residue G117. Positions 119, 123, and 124 each coordinate L-aspartate. L-citrulline is bound at residue N123. Positions 127, 175, 259, and 271 each coordinate L-citrulline.

This sequence belongs to the argininosuccinate synthase family. Type 1 subfamily. As to quaternary structure, homotetramer.

It localises to the cytoplasm. It catalyses the reaction L-citrulline + L-aspartate + ATP = 2-(N(omega)-L-arginino)succinate + AMP + diphosphate + H(+). It functions in the pathway amino-acid biosynthesis; L-arginine biosynthesis; L-arginine from L-ornithine and carbamoyl phosphate: step 2/3. The chain is Argininosuccinate synthase from Clavibacter sepedonicus (Clavibacter michiganensis subsp. sepedonicus).